A 135-amino-acid polypeptide reads, in one-letter code: Fatty acid-binding protein 5 (135 aa).

Ala2 bears the N-acetylalanine mark. At Lys17 the chain carries N6-acetyllysine. Position 22 is a phosphotyrosine; by Tyr-kinases (Tyr22). The Nuclear localization signal motif lies at 24–34 (KEVGVGMALRK). N-eicosanoyl ethanolamine-binding residues include Cys43 and Arg109. Residues Cys120 and Cys127 are joined by a disulfide bond. (9Z,12Z)-octadecadienoate is bound at residue 129-131 (RVY). Residue Tyr131 participates in N-eicosanoyl ethanolamine binding. Tyr131 lines the hexadecanoate pocket. Tyr131 is subject to Phosphotyrosine.

The protein belongs to the calycin superfamily. Fatty-acid binding protein (FABP) family. Monomer. As to expression, most abundant in lens and retina (found in the mueller cells), moderately abundant in heart and testis (found in the Sertoli cells), and present in very low amounts in lung.

The protein localises to the cytoplasm. It localises to the nucleus. Its subcellular location is the synapse. It is found in the postsynaptic density. The protein resides in the secreted. The catalysed reaction is hexadecanoate(out) = hexadecanoate(in). It catalyses the reaction (9Z,12Z)-octadecadienoate(out) = (9Z,12Z)-octadecadienoate(in). The enzyme catalyses (9Z)-octadecenoate(out) = (9Z)-octadecenoate(in). Intracellular carrier for long-chain fatty acids and related active lipids, such as endocannabinoids, that regulate the metabolism and actions of the ligands they bind. In addition to the cytosolic transport, selectively delivers specific fatty acids from the cytosol to the nucleus, wherein they activate nuclear receptors. Delivers retinoic acid to the nuclear receptor peroxisome proliferator-activated receptor delta; which promotes proliferation and survival. May also serve as a synaptic carrier of endocannabinoid at central synapses and thus controls retrograde endocannabinoid signaling. Modulates inflammation by regulating PTGES induction via NF-kappa-B activation, and prostaglandin E2 (PGE2) biosynthesis during inflammation. This Bos taurus (Bovine) protein is Fatty acid-binding protein 5 (FABP5).